The chain runs to 733 residues: Tudor domain-containing protein 3 (733 aa).

The disordered stretch occupies residues 241–281 (TRTFGGGGNAGGNLANPGSSYKSRDTYQRKREEREKPWTEN). Residues 262–281 (KSRDTYQRKREEREKPWTEN) show a composition bias toward basic and acidic residues. One can recognise a UBA domain in the interval 290-330 (LVDERALRDIMEMGFNREAARQALLDNNNNLEVALNLLLTR). Positions 333 to 630 (QPRAAPVEQS…RSGPIKGPRD (298 aa)) are disordered. A compositionally biased stretch (basic residues) spans 346–355 (PRGKGRGKGR). The span at 392 to 408 (PSQQDHQTKMNFSNSDQ) shows a compositional bias: polar residues. Residues 420–441 (PRNDGRSQRNDRPPRFQKDGDF) show a composition bias toward basic and acidic residues. Residues 446–455 (PASSSFSQPQ) are compositionally biased toward polar residues. Over residues 456 to 478 (KWRDGERTGRGGGPERWKNESQD) the composition is skewed to basic and acidic residues. The span at 484-499 (VSYSSSFSKSREQQGA) shows a compositional bias: polar residues. A compositionally biased stretch (basic and acidic residues) spans 559–570 (HSQDALGKKDFQ). The region spanning 639–699 (NWKAGDQCLA…KPLHMDDDED (61 aa)) is the Tudor domain. Residues 706-716 (LEFRRGGDGQP) are compositionally biased toward basic and acidic residues. The segment at 706 to 733 (LEFRRGGDGQPRRSRPTQQYYQPPRARD) is disordered.

As to quaternary structure, component of mRNA stress granules.

It localises to the cytoplasm. The protein resides in the nucleus. Functionally, scaffolding protein that specifically recognizes and binds dimethylarginine-containing proteins. Plays a role in the regulation of translation of target mRNAs by binding Arg/Gly-rich motifs (GAR) in dimethylarginine-containing proteins. In nucleus, acts as a coactivator: recognizes and binds asymmetric dimethylation on the core histone tails associated with transcriptional activation (H3R17me2a and H4R3me2a) and recruits proteins at these arginine-methylated loci. In cytoplasm, acts as an antiviral factor that participates in the assembly of stress granules together with G3BP1. The sequence is that of Tudor domain-containing protein 3 (tdrd3) from Danio rerio (Zebrafish).